The primary structure comprises 265 residues: Mlc titration factor A (265 aa).

Residues His-111, His-148, His-152, and Glu-211 each contribute to the Zn(2+) site.

Belongs to the MtfA family. Interacts with Mlc. Requires Zn(2+) as cofactor.

It localises to the cytoplasm. Functionally, involved in the modulation of the activity of the glucose-phosphotransferase system (glucose-PTS). Interacts with the transcriptional repressor Mlc, preventing its interaction with DNA and leading to the modulation of expression of genes regulated by Mlc, including ptsG, which encodes the PTS system glucose-specific EIICB component. Its function is as follows. Shows zinc-dependent metallopeptidase activity. The chain is Mlc titration factor A from Escherichia coli O7:K1 (strain IAI39 / ExPEC).